The sequence spans 100 residues: Sweet protein mabinlin-4 (100 aa).

4 cysteine pairs are disulfide-bonded: cysteine 4–cysteine 49, cysteine 17–cysteine 38, cysteine 39–cysteine 87, and cysteine 51–cysteine 95.

It belongs to the 2S seed storage albumins family. Heterodimer of a small A and a large B chain linked by disulfide bonds.

Its function is as follows. Heat stable 2S seed storage protein having sweetness-inducing activity. The sequence is that of Sweet protein mabinlin-4 from Capparis masaikai (Mabinlang).